Here is a 200-residue protein sequence, read N- to C-terminus: NADH-quinone oxidoreductase subunit C (200 aa).

The protein belongs to the complex I 30 kDa subunit family. As to quaternary structure, NDH-1 is composed of 14 different subunits. Subunits NuoB, C, D, E, F, and G constitute the peripheral sector of the complex.

It is found in the cell inner membrane. It carries out the reaction a quinone + NADH + 5 H(+)(in) = a quinol + NAD(+) + 4 H(+)(out). Functionally, NDH-1 shuttles electrons from NADH, via FMN and iron-sulfur (Fe-S) centers, to quinones in the respiratory chain. The immediate electron acceptor for the enzyme in this species is believed to be ubiquinone. Couples the redox reaction to proton translocation (for every two electrons transferred, four hydrogen ions are translocated across the cytoplasmic membrane), and thus conserves the redox energy in a proton gradient. This Burkholderia multivorans (strain ATCC 17616 / 249) protein is NADH-quinone oxidoreductase subunit C.